We begin with the raw amino-acid sequence, 3312 residues long: Cadherin EGF LAG seven-pass G-type receptor 3 (3312 aa).

Residues 1 to 32 (MMARRPPWRGLGGRSTPILLLLLLSLFPLSQE) form the signal peptide. The Extracellular portion of the chain corresponds to 33 to 2540 (ELGGGGHQGW…RLEGDLELLA (2508 aa)). 3 disordered regions span residues 90 to 112 (GRRQ…LGIE), 143 to 199 (GRTG…RKRV), and 212 to 306 (GSKG…EARK). Residues 159-173 (SSGVPGSGNSSPLPS) show a composition bias toward low complexity. The span at 290–299 (RPGPRPPGLP) shows a compositional bias: pro residues. Cadherin domains lie at 326 to 433 (PQYN…SPVF), 434 to 545 (EQAQ…APQF), 546 to 651 (SEKR…IPIF), 652 to 756 (VSTP…RPEF), 757 to 858 (TMKE…RPVF), 859 to 961 (QSAH…APQF), 962 to 1067 (VASH…APVF), 1068 to 1169 (PAEE…SPVL), and 1170 to 1265 (NNFQ…RVVI). N-linked (GlcNAc...) asparagine glycosylation occurs at Asn632. Asn847 carries N-linked (GlcNAc...) asparagine glycosylation. Asn1182, Asn1222, Asn1317, and Asn1327 each carry an N-linked (GlcNAc...) asparagine glycan. Positions 1375–1433 (DDNVCLREPCENYMKCVSVLRFDSSAPFLASASTLFRPIQPIAGLRCRCPPGFTGDFCE) constitute an EGF-like 1; calcium-binding domain. 9 disulfides stabilise this stretch: Cys1379–Cys1390, Cys1384–Cys1421, Cys1423–Cys1432, Cys1439–Cys1450, Cys1444–Cys1459, Cys1461–Cys1470, Cys1479–Cys1490, Cys1484–Cys1500, and Cys1502–Cys1513. One can recognise an EGF-like 2; calcium-binding domain in the interval 1435–1471 (ELDLCYSNPCRNGGACARREGGYTCVCRPRFTGEDCE). The region spanning 1475 to 1514 (EAGRCVPGVCRNGGTCTDAPNGGFRCQCPAGGAFEGPRCE) is the EGF-like 3; calcium-binding domain. A Laminin G-like 1 domain is found at 1515–1719 (VAARSFPPSS…VANNGTMAGC (205 aa)). Residues Asn1649 and Asn1713 are each glycosylated (N-linked (GlcNAc...) asparagine). Disulfide bonds link Cys1693/Cys1719, Cys1726/Cys1737, Cys1731/Cys1746, and Cys1748/Cys1757. An EGF-like 4; calcium-binding domain is found at 1722–1758 (KLHFCDSGPCKNSGFCSERWGSFSCDCPVGFGGKDCQ). A Laminin G-like 2 domain is found at 1764–1944 (PHHFRGNGTL…SHRVNAEPGC (181 aa)). Residue Asn1770 is glycosylated (N-linked (GlcNAc...) asparagine). Cystine bridges form between Cys1915-Cys1944, Cys1950-Cys1961, Cys1955-Cys1970, Cys1972-Cys1981, Cys1985-Cys1996, Cys1990-Cys2008, Cys2010-Cys2019, Cys2027-Cys2040, and Cys2042-Cys2052. Residues 1946–1982 (VTNACASGPCPPHADCRDLWQTFSCTCQPGYYGPGCV) enclose the EGF-like 5; calcium-binding domain. Residue Asp1963 is modified to (3R)-3-hydroxyaspartate. Residues 1983–2020 (DACLLNPCQNQGSCRHLPGAPHGYTCDCVGGYFGHHCE) form the EGF-like 6; calcium-binding domain. The EGF-like 7; calcium-binding domain occupies 2021 to 2053 (HRMDQQCPRGWWGSPTCGPCNCDVHKGFDPNCN). Asn2053 carries an N-linked (GlcNAc...) asparagine glycan. The EGF-like 8; calcium-binding domain occupies 2055 to 2090 (TNGQCHCKEFHYRPRGSDSCLPCDCYPVGSTSRSCA). Disulfide bonds link Cys2059–Cys2074, Cys2061–Cys2077, Cys2079–Cys2089, Cys2098–Cys2107, and Cys2110–Cys2122. In terms of domain architecture, Laminin EGF-like spans 2077–2124 (CDCYPVGSTSRSCAPHSGQCPCRPGALGRQCNSCDSPFAEVTASGCRV). Tyr2126 carries the post-translational modification Phosphotyrosine. N-linked (GlcNAc...) asparagine glycans are attached at residues Asn2177, Asn2196, Asn2386, Asn2474, and Asn2506. Positions 2361 to 2399 (THVLLPSQSPRPSPSEVLPTSSSIENSTTSSVVPPPAPP) are disordered. Residues 2368–2530 (QSPRPSPSEV…GVLMDASPRE (163 aa)) form the GAIN-B domain. The span at 2380 to 2391 (TSSSIENSTTSS) shows a compositional bias: low complexity. 2 disulfide bridges follow: Cys2480–Cys2512 and Cys2500–Cys2514. The tract at residues 2480–2530 (CVQWDPPGLAEQHGVWTARDCELVHRNGSHARCRCSRTGTFGVLMDASPRE) is GPS. Residues 2541–2561 (VFTHVVVAVSVAALVLTAAIL) traverse the membrane as a helical segment. The Cytoplasmic portion of the chain corresponds to 2562–2572 (LSLRSLKSNVR). The chain crosses the membrane as a helical span at residues 2573–2593 (GIHANVAAALGVAELLFLLGI). Residues 2594-2601 (HRTHNQLV) lie on the Extracellular side of the membrane. Residues 2602–2622 (CTAVAILLHYFFLSTFAWLFV) form a helical membrane-spanning segment. At 2623-2643 (QGLHLYRMQVEPRNVDRGAMR) the chain is on the cytoplasmic side. The helical transmembrane segment at 2644–2664 (FYHALGWGVPAVLLGLAVGLD) threads the bilayer. At 2665–2681 (PEGYGNPDFCWISVHEP) the chain is on the extracellular side. The chain crosses the membrane as a helical span at residues 2682-2702 (LIWSFAGPVVLVIVMNGTMFL). Residues 2703-2725 (LAARTSCSTGQREAKKTSALTLR) are Cytoplasmic-facing. Residues 2726-2746 (SSFLLLLLVSASWLFGLLAVN) traverse the membrane as a helical segment. Residues 2747–2753 (HSILAFH) are Extracellular-facing. Residues 2754 to 2774 (YLHAGLCGLQGLAVLLLFCVL) form a helical membrane-spanning segment. Topologically, residues 2775–3312 (NADARAAWMP…SEVPRSEGHS (538 aa)) are cytoplasmic. 2 disordered regions span residues 2888–2927 (AGAD…QRPL) and 2978–3006 (TSKD…AQRQ). Residues 2890-2900 (ADSDSDSDLSL) are compositionally biased toward acidic residues. At Tyr3051 the chain carries Phosphotyrosine. Disordered regions lie at residues 3086-3243 (EEAP…TEQL) and 3256-3312 (SALS…EGHS). Position 3097 is a phosphoserine (Ser3097). Low complexity-rich tracts occupy residues 3175–3198 (SPQR…SRSS), 3256–3265 (SALSSVQSSS), and 3272–3281 (TTATPSATAS). Positions 3287–3300 (TPRSATSHSISELS) are enriched in polar residues.

It belongs to the G-protein coupled receptor 2 family. LN-TM7 subfamily.

It localises to the cell membrane. In terms of biological role, receptor that may have an important role in cell/cell signaling during nervous system formation. In Homo sapiens (Human), this protein is Cadherin EGF LAG seven-pass G-type receptor 3 (CELSR3).